We begin with the raw amino-acid sequence, 379 residues long: Bifunctional enzyme IspD/IspF (379 aa).

A 2-C-methyl-D-erythritol 4-phosphate cytidylyltransferase region spans residues Met1–Cys213. Residues Tyr214 to Arg379 are 2-C-methyl-D-erythritol 2,4-cyclodiphosphate synthase. Residues Asp220 and His222 each coordinate a divalent metal cation. 4-CDP-2-C-methyl-D-erythritol 2-phosphate contacts are provided by residues Asp220–His222 and His246–Ser247. Residue His254 participates in a divalent metal cation binding. 4-CDP-2-C-methyl-D-erythritol 2-phosphate is bound by residues Asp268–Gly270, Phe273–Asp277, Thr344–Glu347, Phe351, and Arg354.

In the N-terminal section; belongs to the IspD/TarI cytidylyltransferase family. IspD subfamily. This sequence in the C-terminal section; belongs to the IspF family. A divalent metal cation is required as a cofactor.

The catalysed reaction is 2-C-methyl-D-erythritol 4-phosphate + CTP + H(+) = 4-CDP-2-C-methyl-D-erythritol + diphosphate. The enzyme catalyses 4-CDP-2-C-methyl-D-erythritol 2-phosphate = 2-C-methyl-D-erythritol 2,4-cyclic diphosphate + CMP. The protein operates within isoprenoid biosynthesis; isopentenyl diphosphate biosynthesis via DXP pathway; isopentenyl diphosphate from 1-deoxy-D-xylulose 5-phosphate: step 2/6. Its pathway is isoprenoid biosynthesis; isopentenyl diphosphate biosynthesis via DXP pathway; isopentenyl diphosphate from 1-deoxy-D-xylulose 5-phosphate: step 4/6. In terms of biological role, bifunctional enzyme that catalyzes the formation of 4-diphosphocytidyl-2-C-methyl-D-erythritol from CTP and 2-C-methyl-D-erythritol 4-phosphate (MEP) (IspD), and catalyzes the conversion of 4-diphosphocytidyl-2-C-methyl-D-erythritol 2-phosphate (CDP-ME2P) to 2-C-methyl-D-erythritol 2,4-cyclodiphosphate (ME-CPP) with a corresponding release of cytidine 5-monophosphate (CMP) (IspF). The chain is Bifunctional enzyme IspD/IspF from Wolinella succinogenes (strain ATCC 29543 / DSM 1740 / CCUG 13145 / JCM 31913 / LMG 7466 / NCTC 11488 / FDC 602W) (Vibrio succinogenes).